A 330-amino-acid polypeptide reads, in one-letter code: Phospholipase C (330 aa).

Residues Met1 to Ala34 form the signal peptide. Cys155 and Cys191 are joined by a disulfide.

It belongs to the neutral sphingomyelinase family. Monomer.

It localises to the secreted. The enzyme catalyses a 1,2-diacyl-sn-glycero-3-phosphocholine + H2O = phosphocholine + a 1,2-diacyl-sn-glycerol + H(+). Functionally, bacterial hemolysins are exotoxins that attack blood cell membranes and cause cell rupture. Beta-hemolysin is a phospholipase C with specific activity toward sphingomyelins. Has a high specificity for sphingomyelin, hydrolyzes lysophosphatidylcholine at a much lower rate, but has no activity towards phosphatidylcholine, phosphatidylethanolamine, or phosphatidylserine. This chain is Phospholipase C (hlb), found in Staphylococcus aureus (strain NCTC 8325 / PS 47).